A 332-amino-acid polypeptide reads, in one-letter code: Holliday junction branch migration complex subunit RuvB (332 aa).

The large ATPase domain (RuvB-L) stretch occupies residues 1-181 (MSRILDNEIM…FGITGHMEYY (181 aa)). ATP contacts are provided by residues Leu20, Arg21, Gly62, Lys65, Thr66, Thr67, 128–130 (EDF), Arg171, Tyr181, and Arg218. Thr66 serves as a coordination point for Mg(2+). The interval 182–252 (AHADLTEIVE…ITDKALTMLD (71 aa)) is small ATPAse domain (RuvB-S). Positions 255 to 332 (HEGLDYVDQK…EHLGYEYNEK (78 aa)) are head domain (RuvB-H). 4 residues coordinate DNA: Arg291, Arg310, Arg312, and Arg315.

It belongs to the RuvB family. In terms of assembly, homohexamer. Forms an RuvA(8)-RuvB(12)-Holliday junction (HJ) complex. HJ DNA is sandwiched between 2 RuvA tetramers; dsDNA enters through RuvA and exits via RuvB. An RuvB hexamer assembles on each DNA strand where it exits the tetramer. Each RuvB hexamer is contacted by two RuvA subunits (via domain III) on 2 adjacent RuvB subunits; this complex drives branch migration. In the full resolvosome a probable DNA-RuvA(4)-RuvB(12)-RuvC(2) complex forms which resolves the HJ.

Its subcellular location is the cytoplasm. The catalysed reaction is ATP + H2O = ADP + phosphate + H(+). Its function is as follows. The RuvA-RuvB-RuvC complex processes Holliday junction (HJ) DNA during genetic recombination and DNA repair, while the RuvA-RuvB complex plays an important role in the rescue of blocked DNA replication forks via replication fork reversal (RFR). RuvA specifically binds to HJ cruciform DNA, conferring on it an open structure. The RuvB hexamer acts as an ATP-dependent pump, pulling dsDNA into and through the RuvAB complex. RuvB forms 2 homohexamers on either side of HJ DNA bound by 1 or 2 RuvA tetramers; 4 subunits per hexamer contact DNA at a time. Coordinated motions by a converter formed by DNA-disengaged RuvB subunits stimulates ATP hydrolysis and nucleotide exchange. Immobilization of the converter enables RuvB to convert the ATP-contained energy into a lever motion, pulling 2 nucleotides of DNA out of the RuvA tetramer per ATP hydrolyzed, thus driving DNA branch migration. The RuvB motors rotate together with the DNA substrate, which together with the progressing nucleotide cycle form the mechanistic basis for DNA recombination by continuous HJ branch migration. Branch migration allows RuvC to scan DNA until it finds its consensus sequence, where it cleaves and resolves cruciform DNA. The sequence is that of Holliday junction branch migration complex subunit RuvB from Streptococcus pneumoniae (strain CGSP14).